Reading from the N-terminus, the 247-residue chain is tRNA pseudouridine synthase A (247 aa).

Asp-52 (nucleophile) is an active-site residue. Tyr-113 lines the substrate pocket.

It belongs to the tRNA pseudouridine synthase TruA family. In terms of assembly, homodimer.

The catalysed reaction is uridine(38/39/40) in tRNA = pseudouridine(38/39/40) in tRNA. Its function is as follows. Formation of pseudouridine at positions 38, 39 and 40 in the anticodon stem and loop of transfer RNAs. The chain is tRNA pseudouridine synthase A from Sinorhizobium medicae (strain WSM419) (Ensifer medicae).